Consider the following 310-residue polypeptide: Alpha/beta hydrolase domain-containing protein 17C (310 aa).

Catalysis depends on charge relay system residues serine 192, aspartate 257, and histidine 286.

It belongs to the AB hydrolase superfamily. ABHD17 family. In terms of processing, palmitoylated on cysteine residues located in a cysteine cluster at the N-terminus which promotes membrane localization.

Its subcellular location is the recycling endosome membrane. It is found in the cell projection. The protein localises to the dendritic spine. It localises to the postsynaptic density membrane. The catalysed reaction is S-hexadecanoyl-L-cysteinyl-[protein] + H2O = L-cysteinyl-[protein] + hexadecanoate + H(+). In terms of biological role, hydrolyzes fatty acids from S-acylated cysteine residues in proteins. The sequence is that of Alpha/beta hydrolase domain-containing protein 17C from Xenopus tropicalis (Western clawed frog).